Reading from the N-terminus, the 461-residue chain is Bifunctional protein GlmU (461 aa).

The tract at residues M1–R232 is pyrophosphorylase. UDP-N-acetyl-alpha-D-glucosamine is bound by residues L8–G11, K22, Q73, and G78–T79. D102 provides a ligand contact to Mg(2+). UDP-N-acetyl-alpha-D-glucosamine is bound by residues G142, E157, and N230. N230 serves as a coordination point for Mg(2+). Residues Q233–K253 are linker. Positions G254–D461 are N-acetyltransferase. UDP-N-acetyl-alpha-D-glucosamine-binding residues include R336 and K354. The Proton acceptor role is filled by H366. UDP-N-acetyl-alpha-D-glucosamine-binding residues include Y369 and N380. Acetyl-CoA is bound by residues A383, N389–Y390, S408, and A426.

In the N-terminal section; belongs to the N-acetylglucosamine-1-phosphate uridyltransferase family. This sequence in the C-terminal section; belongs to the transferase hexapeptide repeat family. As to quaternary structure, homotrimer. Requires Mg(2+) as cofactor.

The protein resides in the cytoplasm. It catalyses the reaction alpha-D-glucosamine 1-phosphate + acetyl-CoA = N-acetyl-alpha-D-glucosamine 1-phosphate + CoA + H(+). The catalysed reaction is N-acetyl-alpha-D-glucosamine 1-phosphate + UTP + H(+) = UDP-N-acetyl-alpha-D-glucosamine + diphosphate. It participates in nucleotide-sugar biosynthesis; UDP-N-acetyl-alpha-D-glucosamine biosynthesis; N-acetyl-alpha-D-glucosamine 1-phosphate from alpha-D-glucosamine 6-phosphate (route II): step 2/2. Its pathway is nucleotide-sugar biosynthesis; UDP-N-acetyl-alpha-D-glucosamine biosynthesis; UDP-N-acetyl-alpha-D-glucosamine from N-acetyl-alpha-D-glucosamine 1-phosphate: step 1/1. It functions in the pathway bacterial outer membrane biogenesis; LPS lipid A biosynthesis. Functionally, catalyzes the last two sequential reactions in the de novo biosynthetic pathway for UDP-N-acetylglucosamine (UDP-GlcNAc). The C-terminal domain catalyzes the transfer of acetyl group from acetyl coenzyme A to glucosamine-1-phosphate (GlcN-1-P) to produce N-acetylglucosamine-1-phosphate (GlcNAc-1-P), which is converted into UDP-GlcNAc by the transfer of uridine 5-monophosphate (from uridine 5-triphosphate), a reaction catalyzed by the N-terminal domain. The polypeptide is Bifunctional protein GlmU (Legionella pneumophila (strain Lens)).